Here is a 229-residue protein sequence, read N- to C-terminus: Heptaprenylglyceryl phosphate synthase (229 aa).

Sn-glycerol 1-phosphate is bound at residue Lys12. Mg(2+) is bound by residues Asp14 and Ser40. Sn-glycerol 1-phosphate-binding positions include 159–164 (YLEYSG), Gly189, and 209–210 (GN).

Belongs to the GGGP/HepGP synthase family. Group I subfamily. As to quaternary structure, homodimer. Mg(2+) is required as a cofactor.

It carries out the reaction sn-glycerol 1-phosphate + all-trans-heptaprenyl diphosphate = 3-heptaprenyl-sn-glycero-1-phosphate + diphosphate. It functions in the pathway membrane lipid metabolism; glycerophospholipid metabolism. Functionally, prenyltransferase that catalyzes in vivo the transfer of the heptaprenyl moiety of heptaprenyl pyrophosphate (HepPP; 35 carbon atoms) to the C3 hydroxyl of sn-glycerol-1-phosphate (G1P), producing heptaprenylglyceryl phosphate (HepGP). This reaction is an ether-bond-formation step in the biosynthesis of archaea-type G1P-based membrane lipids found in Bacillales. This is Heptaprenylglyceryl phosphate synthase from Bacillus anthracis (strain A0248).